The chain runs to 59 residues: UPF0391 membrane protein lpp2589 (59 aa).

Helical transmembrane passes span 5 to 25 and 30 to 50; these read ALIF…GIAV and IAKI…IMGL.

It belongs to the UPF0391 family.

It localises to the cell membrane. The chain is UPF0391 membrane protein lpp2589 from Legionella pneumophila (strain Paris).